Consider the following 301-residue polypeptide: ATP synthase gamma chain (301 aa).

It belongs to the ATPase gamma chain family. As to quaternary structure, F-type ATPases have 2 components, CF(1) - the catalytic core - and CF(0) - the membrane proton channel. CF(1) has five subunits: alpha(3), beta(3), gamma(1), delta(1), epsilon(1). CF(0) has three main subunits: a, b and c.

Its subcellular location is the cell inner membrane. Functionally, produces ATP from ADP in the presence of a proton gradient across the membrane. The gamma chain is believed to be important in regulating ATPase activity and the flow of protons through the CF(0) complex. The chain is ATP synthase gamma chain from Bordetella petrii (strain ATCC BAA-461 / DSM 12804 / CCUG 43448).